A 271-amino-acid chain; its full sequence is (+)-cis,trans-nepetalactol synthase NEPS1 (271 aa).

NAD(+) is bound by residues 24-30 (GGASGIG), 49-51 (DIQ), 72-73 (DV), and Asn99. Thr154 and Tyr167 together coordinate substrate. NAD(+) contacts are provided by residues Tyr167, Lys171, and 200–205 (VLTPLA). Tyr167 serves as the catalytic Proton acceptor.

Belongs to the short-chain dehydrogenases/reductases (SDR) family.

It carries out the reaction (S)-8-oxocitronellyl enol = cis-trans-nepetalactol. The enzyme catalyses cis-cis-nepetalactol + NAD(+) = cis-cis-nepetalactone + NADH + H(+). The catalysed reaction is cis-trans-nepetalactol + NAD(+) = cis-trans-nepetalactone + NADH + H(+). In terms of biological role, bifunctional enzyme that possesses cyclase and dehydrogenase activities. Functions as a non-oxidoreductive cyclase to promote the formation of cis-trans-nepetalactol. Functions as dehydrogenase to oxidize cis-cis-nepetalactol and cis-trans-nepetalactol into nepetalactones, metabolites that are both insect-repellent and have euphoric effect in cats. Binds NAD(+) as classical short-chain dehydrogenase/reductase (SDR), but does not utilize it for its redox-neutral cyclase activity. In Nepeta racemosa (Catmint), this protein is (+)-cis,trans-nepetalactol synthase NEPS1.